Reading from the N-terminus, the 524-residue chain is 2-isopropylmalate synthase (524 aa).

The region spanning 12–274 is the Pyruvate carboxyltransferase domain; the sequence is VIIFDTTLRD…WNRIETTMLT (263 aa). 4 residues coordinate Mn(2+): Asp21, His209, His211, and Asn245. The tract at residues 398 to 524 is regulatory domain; that stretch reads KLMSLTVIAG…EDAPTVAVAG (127 aa).

This sequence belongs to the alpha-IPM synthase/homocitrate synthase family. LeuA type 1 subfamily. As to quaternary structure, homodimer. It depends on Mn(2+) as a cofactor.

It is found in the cytoplasm. It carries out the reaction 3-methyl-2-oxobutanoate + acetyl-CoA + H2O = (2S)-2-isopropylmalate + CoA + H(+). It functions in the pathway amino-acid biosynthesis; L-leucine biosynthesis; L-leucine from 3-methyl-2-oxobutanoate: step 1/4. Functionally, catalyzes the condensation of the acetyl group of acetyl-CoA with 3-methyl-2-oxobutanoate (2-ketoisovalerate) to form 3-carboxy-3-hydroxy-4-methylpentanoate (2-isopropylmalate). This Rhodopseudomonas palustris (strain TIE-1) protein is 2-isopropylmalate synthase.